A 370-amino-acid chain; its full sequence is Chloromuconate cycloisomerase (370 aa).

Lysine 165 (proton acceptor) is an active-site residue. Residues aspartate 194, glutamate 220, and aspartate 245 each contribute to the Mn(2+) site. Glutamate 323 (proton donor) is an active-site residue.

Belongs to the mandelate racemase/muconate lactonizing enzyme family. The cofactor is Mn(2+).

The enzyme catalyses 2-[(2R)-2-chloro-2,5-dihydro-5-oxofuryl]acetate = 3-chloro-cis,cis-muconate + H(+). Its pathway is aromatic compound metabolism; 3-chlorocatechol degradation. This Cupriavidus pinatubonensis (strain JMP 134 / LMG 1197) (Cupriavidus necator (strain JMP 134)) protein is Chloromuconate cycloisomerase (tfdDI).